The following is a 607-amino-acid chain: UvrABC system protein C (607 aa).

The 79-residue stretch at 16-94 (ARPGVYRMFD…IKQWRPPYNI (79 aa)) folds into the GIY-YIG domain. Residues 203-238 (QQLGNELNAEMEKAAMALNFEKAAELRDQIALLRRV) enclose the UVR domain.

Belongs to the UvrC family. In terms of assembly, interacts with UvrB in an incision complex.

Its subcellular location is the cytoplasm. Its function is as follows. The UvrABC repair system catalyzes the recognition and processing of DNA lesions. UvrC both incises the 5' and 3' sides of the lesion. The N-terminal half is responsible for the 3' incision and the C-terminal half is responsible for the 5' incision. The sequence is that of UvrABC system protein C from Pseudomonas putida (strain W619).